A 234-amino-acid chain; its full sequence is UPF0173 metal-dependent hydrolase Smed_0942 (234 aa).

It belongs to the UPF0173 family.

The polypeptide is UPF0173 metal-dependent hydrolase Smed_0942 (Sinorhizobium medicae (strain WSM419) (Ensifer medicae)).